The chain runs to 910 residues: 2-oxoglutarate dehydrogenase E1 component (910 aa).

This sequence belongs to the alpha-ketoglutarate dehydrogenase family. As to quaternary structure, homodimer. Part of the 2-oxoglutarate dehydrogenase (OGDH) complex composed of E1 (2-oxoglutarate dehydrogenase), E2 (dihydrolipoamide succinyltransferase) and E3 (dihydrolipoamide dehydrogenase); the complex contains multiple copies of the three enzymatic components (E1, E2 and E3). Thiamine diphosphate serves as cofactor.

The enzyme catalyses N(6)-[(R)-lipoyl]-L-lysyl-[protein] + 2-oxoglutarate + H(+) = N(6)-[(R)-S(8)-succinyldihydrolipoyl]-L-lysyl-[protein] + CO2. In terms of biological role, E1 component of the 2-oxoglutarate dehydrogenase (OGDH) complex which catalyzes the decarboxylation of 2-oxoglutarate, the first step in the conversion of 2-oxoglutarate to succinyl-CoA and CO(2). This is 2-oxoglutarate dehydrogenase E1 component from Staphylococcus aureus (strain N315).